Reading from the N-terminus, the 129-residue chain is Azurin iso-2 (129 aa).

The Plastocyanin-like domain occupies 1–129 (ASCETTVTSG…MMRGTLKLEE (129 aa)). Cys3 and Cys26 are joined by a disulfide. Residues His46, Cys112, His117, and Met121 each coordinate Cu cation.

The protein localises to the periplasm. In terms of biological role, this methylothroph organism uses azurin in the oxidation of methylamine. Iso-2 is probably the acceptor of electrons from methylamine dehydrogenase. The polypeptide is Azurin iso-2 (Methylomonas sp. (strain J)).